A 219-amino-acid polypeptide reads, in one-letter code: Urease accessory protein UreG (219 aa).

The interval M1 to G20 is disordered. Residue G23 to T30 coordinates GTP.

It belongs to the SIMIBI class G3E GTPase family. UreG subfamily. As to quaternary structure, homodimer. UreD, UreF and UreG form a complex that acts as a GTP-hydrolysis-dependent molecular chaperone, activating the urease apoprotein by helping to assemble the nickel containing metallocenter of UreC. The UreE protein probably delivers the nickel.

It is found in the cytoplasm. In terms of biological role, facilitates the functional incorporation of the urease nickel metallocenter. This process requires GTP hydrolysis, probably effectuated by UreG. The sequence is that of Urease accessory protein UreG from Methylibium petroleiphilum (strain ATCC BAA-1232 / LMG 22953 / PM1).